We begin with the raw amino-acid sequence, 336 residues long: L-rhamnono-gamma-lactonase (336 aa).

The protein belongs to the metallo-dependent hydrolases superfamily. Requires a divalent metal cation as cofactor.

The enzyme catalyses L-rhamnono-1,4-lactone + H2O = L-rhamnonate + H(+). Its activity is regulated as follows. Inhibited by Zn(2+), Fe(2+) and Cu(2+), but not by EDTA. Hydrolase with high substrate specificity for L-rhamnono-1,4-lactone. Catalyzes the second step in an alternative pathway for rhamnose utilization that does not involve phosphorylated intermediates. This is L-rhamnono-gamma-lactonase (LRA2) from Scheffersomyces stipitis (strain ATCC 58785 / CBS 6054 / NBRC 10063 / NRRL Y-11545) (Yeast).